The chain runs to 423 residues: UDP-N-acetylglucosamine 1-carboxyvinyltransferase 2 (423 aa).

Position 23 to 24 (23 to 24) interacts with phosphoenolpyruvate; that stretch reads KN. Arg-95 is a binding site for UDP-N-acetyl-alpha-D-glucosamine. The active-site Proton donor is Cys-119. Cys-119 carries the 2-(S-cysteinyl)pyruvic acid O-phosphothioketal modification. UDP-N-acetyl-alpha-D-glucosamine-binding residues include Asp-306 and Ile-328.

This sequence belongs to the EPSP synthase family. MurA subfamily.

The protein resides in the cytoplasm. It catalyses the reaction phosphoenolpyruvate + UDP-N-acetyl-alpha-D-glucosamine = UDP-N-acetyl-3-O-(1-carboxyvinyl)-alpha-D-glucosamine + phosphate. Its pathway is cell wall biogenesis; peptidoglycan biosynthesis. In terms of biological role, cell wall formation. Adds enolpyruvyl to UDP-N-acetylglucosamine. The protein is UDP-N-acetylglucosamine 1-carboxyvinyltransferase 2 of Symbiobacterium thermophilum (strain DSM 24528 / JCM 14929 / IAM 14863 / T).